The following is a 355-amino-acid chain: Probable butyrate kinase (355 aa).

This sequence belongs to the acetokinase family.

It is found in the cytoplasm. It catalyses the reaction butanoate + ATP = butanoyl phosphate + ADP. This Listeria monocytogenes serotype 4b (strain CLIP80459) protein is Probable butyrate kinase.